Consider the following 562-residue polypeptide: Teichoic acid ribitol-phosphate polymerase TarL (562 aa).

Belongs to the CDP-glycerol glycerophosphotransferase family.

It is found in the cell membrane. It carries out the reaction 4-O-[di(2R)-glycerylphospho]-N-acetyl-beta-D-mannosaminyl-(1-&gt;4)-N-acetyl-alpha-D-glucosaminyl di-trans,octa-cis-undecaprenyl diphosphate + n CDP-L-ribitol = 4-O-[(D-ribitylphospho)(n)-di{(2R)-glycerylphospho}]-N-acetyl-beta-D-mannosaminyl-(1-&gt;4)-N-acetyl-alpha-D-glucosaminyl di-trans,octa-cis-undecaprenyl diphosphate + n CMP + n H(+). The protein operates within cell wall biogenesis; poly(ribitol phosphate) teichoic acid biosynthesis. Responsible for the polymerization of the main chain of the major teichoic acid by sequential transfer of ribitol phosphate units from CDP-ribitol to the second glycerol phosphate attached to the disaccharide linkage unit. Synthesizes polymers of more than 40 ribitol phosphate units in length. In Staphylococcus aureus (strain NCTC 8325 / PS 47), this protein is Teichoic acid ribitol-phosphate polymerase TarL (tarL).